An 87-amino-acid polypeptide reads, in one-letter code: Citrate lyase acyl carrier protein (87 aa).

Position 14 is an O-(phosphoribosyl dephospho-coenzyme A)serine (Ser14).

It belongs to the CitD family. As to quaternary structure, oligomer with a subunit composition of (alpha,beta,gamma)6.

It localises to the cytoplasm. Covalent carrier of the coenzyme of citrate lyase. The protein is Citrate lyase acyl carrier protein of Treponema denticola (strain ATCC 35405 / DSM 14222 / CIP 103919 / JCM 8153 / KCTC 15104).